Consider the following 164-residue polypeptide: MNIVDQQTFRDAMSCMGAAVNIITTDGPAGRAGFTASAVCSVTDTPPTLLVCLNRGASVWPVFNENRTLCVNTLSAGQEPLSNLFGGKTPMEHRFAAARWQTGVTGCPQLEKALVSFDCRISQVVSVGTHDILFCAIEAIHRHATPYGLVWFDRSYHALMRPAC.

This sequence belongs to the non-flavoprotein flavin reductase family. RutF subfamily.

The enzyme catalyses FMNH2 + NAD(+) = FMN + NADH + 2 H(+). In terms of biological role, catalyzes the reduction of FMN to FMNH2 which is used to reduce pyrimidine by RutA via the Rut pathway. This Escherichia coli O150:H5 (strain SE15) protein is FMN reductase (NADH) RutF.